Consider the following 102-residue polypeptide: MANQKIRIRLRAYDHELIDQSAQKIVEAAKRTDVKVSGPIPLPTEKEVITILRAVHKYKDSREQFEQRTHKRLIDIINPNAKTLEALKKLNLPAGVDIEIKL.

This sequence belongs to the universal ribosomal protein uS10 family. In terms of assembly, part of the 30S ribosomal subunit.

Its function is as follows. Involved in the binding of tRNA to the ribosomes. This Finegoldia magna (strain ATCC 29328 / DSM 20472 / WAL 2508) (Peptostreptococcus magnus) protein is Small ribosomal subunit protein uS10.